Here is a 493-residue protein sequence, read N- to C-terminus: Protein nucleotidyltransferase YdiU (493 aa).

ATP-binding residues include Gly94, Gly96, Arg97, Lys117, Asp129, Gly130, Arg180, and Arg187. Residue Asp256 is the Proton acceptor of the active site. Asn257 and Asp266 together coordinate Mg(2+). Residue Asp266 participates in ATP binding.

The protein belongs to the SELO family. The cofactor is Mg(2+). Mn(2+) is required as a cofactor.

The catalysed reaction is L-seryl-[protein] + ATP = 3-O-(5'-adenylyl)-L-seryl-[protein] + diphosphate. It catalyses the reaction L-threonyl-[protein] + ATP = 3-O-(5'-adenylyl)-L-threonyl-[protein] + diphosphate. The enzyme catalyses L-tyrosyl-[protein] + ATP = O-(5'-adenylyl)-L-tyrosyl-[protein] + diphosphate. It carries out the reaction L-histidyl-[protein] + UTP = N(tele)-(5'-uridylyl)-L-histidyl-[protein] + diphosphate. The catalysed reaction is L-seryl-[protein] + UTP = O-(5'-uridylyl)-L-seryl-[protein] + diphosphate. It catalyses the reaction L-tyrosyl-[protein] + UTP = O-(5'-uridylyl)-L-tyrosyl-[protein] + diphosphate. Nucleotidyltransferase involved in the post-translational modification of proteins. It can catalyze the addition of adenosine monophosphate (AMP) or uridine monophosphate (UMP) to a protein, resulting in modifications known as AMPylation and UMPylation. The protein is Protein nucleotidyltransferase YdiU of Hahella chejuensis (strain KCTC 2396).